Consider the following 1755-residue polypeptide: Transposon Ty1-NL1 Gag-Pol polyprotein (1755 aa).

Composition is skewed to polar residues over residues M1 to S23, T48 to S60, S71 to Q86, and P131 to F152. 3 disordered regions span residues M1–Q86, P131–P171, and Q350–S420. Low complexity predominate over residues T153–T165. The interval N299–H401 is RNA-binding. Residues N363–R372 show a composition bias toward basic and acidic residues. Residues T373–P412 are compositionally biased toward polar residues. Catalysis depends on D461, which acts as the For protease activity; shared with dimeric partner. The tract at residues N583–C640 is integrase-type zinc finger-like. The 176-residue stretch at N660 to P835 folds into the Integrase catalytic domain. The Mg(2+) site is built by D671 and D736. Disordered stretches follow at residues S956–K1120 and D1146–Y1172. The segment covering S960–T969 has biased composition (low complexity). The span at S1005–T1015 shows a compositional bias: polar residues. Basic and acidic residues predominate over residues E1038–S1053. Composition is skewed to polar residues over residues Y1054–E1082 and S1095–L1106. A Bipartite nuclear localization signal motif is present at residues K1178–R1212. A Reverse transcriptase Ty1/copia-type domain is found at N1338–Q1476. Mg(2+) contacts are provided by D1346, D1427, D1428, D1610, E1652, and D1685. One can recognise an RNase H Ty1/copia-type domain in the interval D1610–K1752.

As to quaternary structure, the capsid protein forms a homotrimer, from which the VLPs are assembled. The protease is a homodimer, whose active site consists of two apposed aspartic acid residues. Initially, virus-like particles (VLPs) are composed of the structural unprocessed proteins Gag and Gag-Pol, and also contain the host initiator methionine tRNA (tRNA(i)-Met) which serves as a primer for minus-strand DNA synthesis, and a dimer of genomic Ty RNA. Processing of the polyproteins occurs within the particle and proceeds by an ordered pathway, called maturation. First, the protease (PR) is released by autocatalytic cleavage of the Gag-Pol polyprotein yielding capsid protein p45 and a Pol-p154 precursor protein. This cleavage is a prerequisite for subsequent processing of Pol-p154 at the remaining sites to release the mature structural and catalytic proteins. Maturation takes place prior to the RT reaction and is required to produce transposition-competent VLPs.

It is found in the cytoplasm. The protein resides in the nucleus. It carries out the reaction DNA(n) + a 2'-deoxyribonucleoside 5'-triphosphate = DNA(n+1) + diphosphate. It catalyses the reaction Endonucleolytic cleavage to 5'-phosphomonoester.. In terms of biological role, capsid protein (CA) is the structural component of the virus-like particle (VLP), forming the shell that encapsulates the retrotransposons dimeric RNA genome. The particles are assembled from trimer-clustered units and there are holes in the capsid shells that allow for the diffusion of macromolecules. CA also has nucleocapsid-like chaperone activity, promoting primer tRNA(i)-Met annealing to the multipartite primer-binding site (PBS), dimerization of Ty1 RNA and initiation of reverse transcription. Functionally, the aspartyl protease (PR) mediates the proteolytic cleavages of the Gag and Gag-Pol polyproteins after assembly of the VLP. Its function is as follows. Reverse transcriptase/ribonuclease H (RT) is a multifunctional enzyme that catalyzes the conversion of the retro-elements RNA genome into dsDNA within the VLP. The enzyme displays a DNA polymerase activity that can copy either DNA or RNA templates, and a ribonuclease H (RNase H) activity that cleaves the RNA strand of RNA-DNA heteroduplexes during plus-strand synthesis and hydrolyzes RNA primers. The conversion leads to a linear dsDNA copy of the retrotransposon that includes long terminal repeats (LTRs) at both ends. Integrase (IN) targets the VLP to the nucleus, where a subparticle preintegration complex (PIC) containing at least integrase and the newly synthesized dsDNA copy of the retrotransposon must transit the nuclear membrane. Once in the nucleus, integrase performs the integration of the dsDNA into the host genome. This Saccharomyces cerevisiae (strain ATCC 204508 / S288c) (Baker's yeast) protein is Transposon Ty1-NL1 Gag-Pol polyprotein (TY1B-NL1).